The sequence spans 185 residues: Ribosome-recycling factor (185 aa).

This sequence belongs to the RRF family.

It localises to the cytoplasm. Responsible for the release of ribosomes from messenger RNA at the termination of protein biosynthesis. May increase the efficiency of translation by recycling ribosomes from one round of translation to another. The chain is Ribosome-recycling factor from Campylobacter jejuni subsp. doylei (strain ATCC BAA-1458 / RM4099 / 269.97).